Reading from the N-terminus, the 425-residue chain is Serine--tRNA ligase (425 aa).

231–233 (TAE) lines the L-serine pocket. 262–264 (RSE) is a binding site for ATP. L-serine is bound at residue Glu-285. 349–352 (EISS) contacts ATP. Ser-385 provides a ligand contact to L-serine.

It belongs to the class-II aminoacyl-tRNA synthetase family. Type-1 seryl-tRNA synthetase subfamily. As to quaternary structure, homodimer. The tRNA molecule binds across the dimer.

Its subcellular location is the cytoplasm. It carries out the reaction tRNA(Ser) + L-serine + ATP = L-seryl-tRNA(Ser) + AMP + diphosphate + H(+). It catalyses the reaction tRNA(Sec) + L-serine + ATP = L-seryl-tRNA(Sec) + AMP + diphosphate + H(+). It participates in aminoacyl-tRNA biosynthesis; selenocysteinyl-tRNA(Sec) biosynthesis; L-seryl-tRNA(Sec) from L-serine and tRNA(Sec): step 1/1. Functionally, catalyzes the attachment of serine to tRNA(Ser). Is also able to aminoacylate tRNA(Sec) with serine, to form the misacylated tRNA L-seryl-tRNA(Sec), which will be further converted into selenocysteinyl-tRNA(Sec). This chain is Serine--tRNA ligase, found in Bacillus subtilis (strain 168).